A 137-amino-acid chain; its full sequence is Endoribonuclease YbeY (137 aa).

Residues His105, His109, and Asp115 each contribute to the Zn(2+) site.

Belongs to the endoribonuclease YbeY family. It depends on Zn(2+) as a cofactor.

It is found in the cytoplasm. Its function is as follows. Single strand-specific metallo-endoribonuclease involved in late-stage 70S ribosome quality control and in maturation of the 3' terminus of the 16S rRNA. This chain is Endoribonuclease YbeY, found in Chlorobium luteolum (strain DSM 273 / BCRC 81028 / 2530) (Pelodictyon luteolum).